Consider the following 89-residue polypeptide: SAP domain-containing new25 (89 aa).

One can recognise an SAP domain in the interval 44–78 (PSQWSKKQLIEYCKKNSLKTSGSHEELVIRVQNHL).

The sequence is that of SAP domain-containing new25 (new25) from Schizosaccharomyces pombe (strain 972 / ATCC 24843) (Fission yeast).